A 158-amino-acid chain; its full sequence is C-type lectin lectoxin-Enh5 (158 aa).

A signal peptide spans 1-23; it reads MGQFTVVSLGLLAVFLSLSGAKG. 3 cysteine pairs are disulfide-bonded: C26/C37, C54/C154, and C129/C146. The C-type lectin domain occupies 33 to 155; sequence RNGVCNKLFP…CASLHPFICQ (123 aa). The Mannose-binding signature appears at 119-121; sequence EPN. 3 residues coordinate Ca(2+): E127, N142, and D143.

This sequence belongs to the true venom lectin family. As to expression, expressed by the venom gland.

Its subcellular location is the secreted. Mannose-binding lectin which recognizes specific carbohydrate structures and agglutinates a variety of animal cells by binding to cell-surface glycoproteins and glycolipids. May be a calcium-dependent lectin. This chain is C-type lectin lectoxin-Enh5, found in Pseudoferania polylepis (Macleay's water snake).